A 406-amino-acid polypeptide reads, in one-letter code: Probable G-protein coupled receptor tkr-1 (406 aa).

Residues methionine 1 to alanine 47 are Extracellular-facing. Residues isoleucine 48 to isoleucine 68 traverse the membrane as a helical segment. The Cytoplasmic portion of the chain corresponds to tyrosine 69–tyrosine 76. Residues glycine 77 to valine 97 form a helical membrane-spanning segment. The Extracellular segment spans residues glycine 98–cysteine 115. Residues threonine 116–leucine 136 traverse the membrane as a helical segment. Residues serine 137–serine 158 lie on the Cytoplasmic side of the membrane. Residues valine 159 to alanine 179 traverse the membrane as a helical segment. Over alanine 180 to proline 204 the chain is Extracellular. The chain crosses the membrane as a helical span at residues valine 205–leucine 225. The Cytoplasmic segment spans residues glycine 226–methionine 261. Residues leucine 262–phenylalanine 282 form a helical membrane-spanning segment. The Extracellular segment spans residues alanine 283–tyrosine 297. A helical membrane pass occupies residues leucine 298–alanine 318. At asparagine 319–arginine 406 the chain is on the cytoplasmic side.

Belongs to the G-protein coupled receptor 1 family.

The protein resides in the cell membrane. Functionally, not known. Putative receptor. The polypeptide is Probable G-protein coupled receptor tkr-1 (tkr-1) (Caenorhabditis elegans).